An 848-amino-acid chain; its full sequence is Alanine--tRNA ligase (848 aa).

Zn(2+) contacts are provided by His-553, His-557, Cys-654, and His-658.

This sequence belongs to the class-II aminoacyl-tRNA synthetase family. Requires Zn(2+) as cofactor.

The protein localises to the cytoplasm. It catalyses the reaction tRNA(Ala) + L-alanine + ATP = L-alanyl-tRNA(Ala) + AMP + diphosphate. Its function is as follows. Catalyzes the attachment of alanine to tRNA(Ala) in a two-step reaction: alanine is first activated by ATP to form Ala-AMP and then transferred to the acceptor end of tRNA(Ala). Also edits incorrectly charged Ser-tRNA(Ala) and Gly-tRNA(Ala) via its editing domain. The protein is Alanine--tRNA ligase of Neorickettsia sennetsu (strain ATCC VR-367 / Miyayama) (Ehrlichia sennetsu).